Consider the following 188-residue polypeptide: Tetratricopeptide repeat protein 36 (188 aa).

TPR repeat units follow at residues 50–83 (SKALELQAVIAAEAGDLSTALERFGQAINLLPER), 85–117 (SAYNNRAQARRLQGDVAGALEDLERALALSGGR), and 122–155 (RQGFVQRGLVARLQGRDDDARRDFERAARLGSPF).

The protein belongs to the TTC36 family.

The polypeptide is Tetratricopeptide repeat protein 36 (TTC36) (Bos taurus (Bovine)).